The following is a 118-amino-acid chain: Autophagy-related protein 8 (118 aa).

Gly-116 carries the Phosphatidylethanolamine amidated glycine lipid modification. Residues 117–118 (SI) constitute a propeptide, removed in mature form.

This sequence belongs to the ATG8 family. As to quaternary structure, conjugation to phosphatidylethanolamine (PE) leads to homodimerization. Interacts with ATG1, ATG3, ATG4, ATG7 and ATG12. The C-terminal Ser-117 and Ile-118 residues of ATG8 are removed by ATG4 to expose Gly-116 at the C-terminus. This Gly-116 forms then a thioester bond with ATG7 (E1-like activating enzyme) before being transferred to ATG3 (the specific E2 conjugating enzyme), in order to be finally amidated with phosphatidylethanolamine. This lipid modification anchors ATG8 to membranes and can be reversed by ATG4, releasing soluble ATG8.

It localises to the cytoplasmic vesicle. The protein localises to the cvt vesicle membrane. Its subcellular location is the autophagosome membrane. It is found in the vacuole membrane. Functionally, ubiquitin-like modifier involved in cytoplasm to vacuole transport (Cvt) vesicles and autophagosome formation. With ATG4, mediates the delivery of the vesicles and autophagosomes to the vacuole via the microtubule cytoskeleton. Required for selective autophagic degradation of the nucleus (nucleophagy) as well as for mitophagy which contributes to regulate mitochondrial quantity and quality by eliminating the mitochondria to a basal level to fulfill cellular energy requirements and preventing excess ROS production. Also participates in membrane fusion events that take place in the early secretory pathway. Also involved in endoplasmic reticulum-specific autophagic process and is essential for the survival of cells subjected to severe ER stress. The ATG8-PE conjugate mediates tethering between adjacent membranes and stimulates membrane hemifusion, leading to expansion of the autophagosomal membrane during autophagy. Moreover not only conjugation, but also subsequent ATG8-PE deconjugation is an important step required to facilitate multiple events during macroautophagy, and especially for efficient autophagosome biogenesis, the assembly of ATG9-containing tubulovesicular clusters into phagophores/autophagosomes, and for the disassembly of PAS-associated ATG components. Contributes to conidiation by regulating the conidial levels of the conidiation-related protein CP15 and mediates fungal oxidation resistance by controlling total superoxide dismutase (SOD) activity. The protein is Autophagy-related protein 8 of Beauveria bassiana (strain ARSEF 2860) (White muscardine disease fungus).